A 535-amino-acid polypeptide reads, in one-letter code: Phosphoenolpyruvate carboxykinase (ATP) (535 aa).

The substrate site is built by arginine 59, tyrosine 201, and lysine 207. ATP contacts are provided by residues lysine 207, histidine 226, and 243–251 (GLSGTGKTT). Residues lysine 207 and histidine 226 each contribute to the Mn(2+) site. Aspartate 264 provides a ligand contact to Mn(2+). Residues glutamate 292, arginine 328, 444-445 (RI), and threonine 450 each bind ATP. Residue arginine 328 participates in substrate binding.

This sequence belongs to the phosphoenolpyruvate carboxykinase (ATP) family. Requires Mn(2+) as cofactor.

It localises to the cytoplasm. The enzyme catalyses oxaloacetate + ATP = phosphoenolpyruvate + ADP + CO2. It participates in carbohydrate biosynthesis; gluconeogenesis. Involved in the gluconeogenesis. Catalyzes the conversion of oxaloacetate (OAA) to phosphoenolpyruvate (PEP) through direct phosphoryl transfer between the nucleoside triphosphate and OAA. This is Phosphoenolpyruvate carboxykinase (ATP) from Porphyromonas gingivalis (strain ATCC 33277 / DSM 20709 / CIP 103683 / JCM 12257 / NCTC 11834 / 2561).